Reading from the N-terminus, the 397-residue chain is Cytochrome b (397 aa).

4 helical membrane passes run 48 to 68 (FGSMLGLCLVIQLLSGLLLSA), 92 to 113 (WMLRNIHANGSSMFFICIYAHI), 128 to 148 (WYFGVHLFLLTMAEAFLGYTL), and 193 to 213 (FYTLHFLLPFVMVAVVFLHLF). His-98 and His-112 together coordinate heme b. Residues His-197 and His-211 each coordinate heme b. His-216 lines the a ubiquinone pocket. A run of 4 helical transmembrane segments spans residues 241 to 261 (IKDLFGYVCFSFFFMYLVCVD), 303 to 323 (AGGVYVMFLSIVVLYLIPTLH), 335 to 355 (LNQVVFWVLVGSFISLTWIGA), and 362 to 382 (YIILGSAFQLFISLVYCWTPF).

The protein belongs to the cytochrome b family. The main subunits of complex b-c1 are: cytochrome b, cytochrome c1 and the Rieske protein. The cofactor is heme b.

It localises to the mitochondrion inner membrane. Its function is as follows. Component of the ubiquinol-cytochrome c reductase complex (complex III or cytochrome b-c1 complex) that is part of the mitochondrial respiratory chain. The b-c1 complex mediates electron transfer from ubiquinol to cytochrome c. Contributes to the generation of a proton gradient across the mitochondrial membrane that is then used for ATP synthesis. The polypeptide is Cytochrome b (MT-CYB) (Mytilus edulis (Blue mussel)).